The primary structure comprises 590 residues: CTP synthase (590 aa).

The interval 1–281 (MPALRKHPQT…DAYVVRRLNL (281 aa)) is amidoligase domain. Serine 23 contributes to the CTP binding site. Serine 23 lines the UTP pocket. Residues 24-29 (SLGKGL) and aspartate 81 each bind ATP. Residues aspartate 81 and glutamate 155 each contribute to the Mg(2+) site. Residues 162–164 (DIE), 202–207 (KTKPTQ), and lysine 238 each bind CTP. UTP is bound by residues 202-207 (KTKPTQ) and lysine 238. The Glutamine amidotransferase type-1 domain occupies 306-554 (RIALVGKYID…IGAAIDYKAA (249 aa)). Position 369 (glycine 369) interacts with L-glutamine. Cysteine 396 functions as the Nucleophile; for glutamine hydrolysis in the catalytic mechanism. L-glutamine is bound by residues 397–400 (LGLQ), glutamate 419, and arginine 480. Residues histidine 527 and glutamate 529 contribute to the active site.

It belongs to the CTP synthase family. Homotetramer.

It catalyses the reaction UTP + L-glutamine + ATP + H2O = CTP + L-glutamate + ADP + phosphate + 2 H(+). The catalysed reaction is L-glutamine + H2O = L-glutamate + NH4(+). The enzyme catalyses UTP + NH4(+) + ATP = CTP + ADP + phosphate + 2 H(+). The protein operates within pyrimidine metabolism; CTP biosynthesis via de novo pathway; CTP from UDP: step 2/2. Its activity is regulated as follows. Allosterically activated by GTP, when glutamine is the substrate; GTP has no effect on the reaction when ammonia is the substrate. The allosteric effector GTP functions by stabilizing the protein conformation that binds the tetrahedral intermediate(s) formed during glutamine hydrolysis. Inhibited by the product CTP, via allosteric rather than competitive inhibition. Its function is as follows. Catalyzes the ATP-dependent amination of UTP to CTP with either L-glutamine or ammonia as the source of nitrogen. Regulates intracellular CTP levels through interactions with the four ribonucleotide triphosphates. In Mycolicibacterium smegmatis (strain ATCC 700084 / mc(2)155) (Mycobacterium smegmatis), this protein is CTP synthase.